We begin with the raw amino-acid sequence, 189 residues long: Peptidyl-tRNA hydrolase (189 aa).

Tyrosine 15 lines the tRNA pocket. Histidine 20 functions as the Proton acceptor in the catalytic mechanism. TRNA contacts are provided by phenylalanine 66, asparagine 68, and asparagine 114.

This sequence belongs to the PTH family. In terms of assembly, monomer.

The protein localises to the cytoplasm. It catalyses the reaction an N-acyl-L-alpha-aminoacyl-tRNA + H2O = an N-acyl-L-amino acid + a tRNA + H(+). Functionally, hydrolyzes ribosome-free peptidyl-tRNAs (with 1 or more amino acids incorporated), which drop off the ribosome during protein synthesis, or as a result of ribosome stalling. Its function is as follows. Catalyzes the release of premature peptidyl moieties from peptidyl-tRNA molecules trapped in stalled 50S ribosomal subunits, and thus maintains levels of free tRNAs and 50S ribosomes. The protein is Peptidyl-tRNA hydrolase of Streptococcus suis (strain 98HAH33).